The following is a 230-amino-acid chain: Orotidine 5'-phosphate decarboxylase (230 aa).

Substrate-binding positions include Asp10, Lys31, 58 to 67 (DLKLHDIPNT), Thr117, Arg179, Gln188, Gly208, and Arg209. The Proton donor role is filled by Lys60.

It belongs to the OMP decarboxylase family. Type 1 subfamily. In terms of assembly, homodimer.

It catalyses the reaction orotidine 5'-phosphate + H(+) = UMP + CO2. The protein operates within pyrimidine metabolism; UMP biosynthesis via de novo pathway; UMP from orotate: step 2/2. In terms of biological role, catalyzes the decarboxylation of orotidine 5'-monophosphate (OMP) to uridine 5'-monophosphate (UMP). This chain is Orotidine 5'-phosphate decarboxylase, found in Staphylococcus aureus (strain bovine RF122 / ET3-1).